The primary structure comprises 370 residues: UDP-N-acetylglucosamine--N-acetylmuramyl-(pentapeptide) pyrophosphoryl-undecaprenol N-acetylglucosamine transferase (370 aa).

UDP-N-acetyl-alpha-D-glucosamine-binding positions include 10–12, Asn-124, Ser-196, Ile-253, and Gln-298; that span reads TGG.

The protein belongs to the glycosyltransferase 28 family. MurG subfamily.

It localises to the cell membrane. It carries out the reaction Mur2Ac(oyl-L-Ala-gamma-D-Glu-L-Lys-D-Ala-D-Ala)-di-trans,octa-cis-undecaprenyl diphosphate + UDP-N-acetyl-alpha-D-glucosamine = beta-D-GlcNAc-(1-&gt;4)-Mur2Ac(oyl-L-Ala-gamma-D-Glu-L-Lys-D-Ala-D-Ala)-di-trans,octa-cis-undecaprenyl diphosphate + UDP + H(+). Its pathway is cell wall biogenesis; peptidoglycan biosynthesis. Its function is as follows. Cell wall formation. Catalyzes the transfer of a GlcNAc subunit on undecaprenyl-pyrophosphoryl-MurNAc-pentapeptide (lipid intermediate I) to form undecaprenyl-pyrophosphoryl-MurNAc-(pentapeptide)GlcNAc (lipid intermediate II). This is UDP-N-acetylglucosamine--N-acetylmuramyl-(pentapeptide) pyrophosphoryl-undecaprenol N-acetylglucosamine transferase from Limosilactobacillus reuteri subsp. reuteri (strain JCM 1112) (Lactobacillus reuteri).